Consider the following 342-residue polypeptide: Dihydroorotate dehydrogenase (quinone) (342 aa).

FMN-binding positions include 60–64 (AGLDK) and T84. Residue K64 coordinates substrate. Residue 109–113 (NRMGF) coordinates substrate. 2 residues coordinate FMN: N137 and N170. N170 contacts substrate. S173 serves as the catalytic Nucleophile. Residue N175 participates in substrate binding. FMN is bound by residues K215 and T243. Position 244-245 (244-245 (NT)) interacts with substrate. FMN contacts are provided by residues G266, G295, and 316–317 (YS).

The protein belongs to the dihydroorotate dehydrogenase family. Type 2 subfamily. As to quaternary structure, monomer. Requires FMN as cofactor.

The protein resides in the cell membrane. The enzyme catalyses (S)-dihydroorotate + a quinone = orotate + a quinol. It participates in pyrimidine metabolism; UMP biosynthesis via de novo pathway; orotate from (S)-dihydroorotate (quinone route): step 1/1. Functionally, catalyzes the conversion of dihydroorotate to orotate with quinone as electron acceptor. The polypeptide is Dihydroorotate dehydrogenase (quinone) (Nitrosomonas eutropha (strain DSM 101675 / C91 / Nm57)).